The primary structure comprises 289 residues: Rhodopsin (289 aa).

Residues 1–7 (YLVNPAA) lie on the Extracellular side of the membrane. Residues 8-32 (YAALGAYMFLLILIGFPVNFLTLYV) form a helical membrane-spanning segment. Residues 33–44 (TLEHKKLRTPLN) lie on the Cytoplasmic side of the membrane. The helical transmembrane segment at 45–67 (YILLNLAVADLFMVLGGFTTTMY) threads the bilayer. Residues 68-81 (TSMHGYFVLGRLGC) are Extracellular-facing. A disulfide bond links C81 and C158. A helical membrane pass occupies residues 82–104 (NLEGFFATLGGEIALWSLVVLAI). The 'Ionic lock' involved in activated form stabilization signature appears at 105-107 (ERW). At 105–123 (ERWIVVCKPISNFRFTEDH) the chain is on the cytoplasmic side. The chain crosses the membrane as a helical span at residues 124–144 (AIMGLAFSWVMALSCSVPPLV). Topologically, residues 145-173 (GWSRYIPEAMQCSCGVDYYTRAEGFNTES) are extracellular. Residues 174–195 (FVLYMFTVHFLIPLSVIFFCYG) form a helical membrane-spanning segment. Residues 196–223 (RLLCAVKEAAAAQQESETTQRSEKEVSR) are Cytoplasmic-facing. The chain crosses the membrane as a helical span at residues 224–245 (MVVLMVIGFLVCWLPYASTAWW). The Extracellular portion of the chain corresponds to 246–257 (IFCNQGSEFGPV). Residues 258-279 (FMTIPAFFAKSSAIYNPMIYIC) traverse the membrane as a helical segment. K267 carries the post-translational modification N6-(retinylidene)lysine. Residues 280 to 289 (MNKQFRHCMI) are Cytoplasmic-facing.

This sequence belongs to the G-protein coupled receptor 1 family. Opsin subfamily. In terms of processing, phosphorylated on some or all of the serine and threonine residues present in the C-terminal region. Contains one covalently linked retinal chromophore.

Its subcellular location is the membrane. The protein localises to the cell projection. The protein resides in the cilium. It is found in the photoreceptor outer segment. In terms of biological role, photoreceptor required for image-forming vision at low light intensity. While most salt water fish species use retinal as chromophore, most freshwater fish use 3-dehydroretinal, or a mixture of retinal and 3-dehydroretinal. Light-induced isomerization of 11-cis to all-trans retinal triggers a conformational change that activates signaling via G-proteins. Subsequent receptor phosphorylation mediates displacement of the bound G-protein alpha subunit by arrestin and terminates signaling. The sequence is that of Rhodopsin (rho) from Comephorus dybowskii.